A 460-amino-acid polypeptide reads, in one-letter code: tRNA modification GTPase MnmE (460 aa).

Residues Arg-24, Glu-81, and Lys-121 each contribute to the (6S)-5-formyl-5,6,7,8-tetrahydrofolate site. The TrmE-type G domain maps to 218-385 (GMVVAIAGPP…LIAAIEDFAA (168 aa)). GTP-binding positions include 228–233 (NVGKST), 247–253 (SPHAGTT), and 272–275 (DTAG). The Mg(2+) site is built by Ser-232 and Thr-253. Residue Lys-460 coordinates (6S)-5-formyl-5,6,7,8-tetrahydrofolate.

The protein belongs to the TRAFAC class TrmE-Era-EngA-EngB-Septin-like GTPase superfamily. TrmE GTPase family. Homodimer. Heterotetramer of two MnmE and two MnmG subunits. K(+) serves as cofactor.

The protein localises to the cytoplasm. Functionally, exhibits a very high intrinsic GTPase hydrolysis rate. Involved in the addition of a carboxymethylaminomethyl (cmnm) group at the wobble position (U34) of certain tRNAs, forming tRNA-cmnm(5)s(2)U34. This Rhodopseudomonas palustris (strain BisB5) protein is tRNA modification GTPase MnmE.